The primary structure comprises 230 residues: U2 small nuclear ribonucleoprotein A' (230 aa).

3 LRR repeats span residues Lys-19–Pro-40, Arg-41–Ser-62, and Gly-65–Arg-86. The 39-residue stretch at Asn-99–Leu-137 folds into the LRRCT domain. Residues Gly-211–Leu-230 form a disordered region. Residues Ile-213–Asn-223 show a composition bias toward gly residues.

This sequence belongs to the U2 small nuclear ribonucleoprotein A family. Associated with the spliceosome.

The protein localises to the nucleus. Its function is as follows. Involved in pre-mRNA splicing. The sequence is that of U2 small nuclear ribonucleoprotein A' (lea1) from Emericella nidulans (strain FGSC A4 / ATCC 38163 / CBS 112.46 / NRRL 194 / M139) (Aspergillus nidulans).